Consider the following 192-residue polypeptide: T-cell surface glycoprotein CD3 epsilon chain (192 aa).

An N-terminal signal peptide occupies residues 1–21 (MQSGNLWRALGLCLLLVGAWA). Over 23–114 (DADEQKPYEV…QNCMEVNLME (92 aa)) the chain is Extracellular. Residues 26-97 (EQKPYEVSIS…EGNKEAAHTL (72 aa)) form the Ig-like domain. Cysteine 43 and cysteine 84 are disulfide-bonded. N-linked (GlcNAc...) asparagine glycosylation occurs at asparagine 72. Residues 115-135 (VATIIVVDICVTLGLLLLVYY) traverse the membrane as a helical segment. Over 136-192 (WSKSRKAKASPMTRGAGAGGRPRGQNKGRPPPVPNPDYEPIRKGQRDLYAGLNQRGV) the chain is Cytoplasmic. The segment at 145–180 (SPMTRGAGAGGRPRGQNKGRPPPVPNPDYEPIRKGQ) is disordered. Residues 160–177 (QNKGRPPPVPNPDYEPIR) form an NUMB-binding region region. In terms of domain architecture, ITAM spans 163–190 (GRPPPVPNPDYEPIRKGQRDLYAGLNQR). Residues 164-171 (RPPPVPNP) are proline-rich sequence. Tyrosine 173 and tyrosine 184 each carry phosphotyrosine.

As to quaternary structure, the TCR-CD3 complex is composed of a CD3D/CD3E and a CD3G/CD3E heterodimers that preferentially associate with TCRalpha and TCRbeta, respectively, to form TCRalpha/CD3E/CD3G and TCRbeta/CD3G/CD3E trimers. In turn, the hexamer interacts with CD3Z homodimer to form the TCR-CD3 complex. Alternatively, TCRalpha and TCRbeta can be replaced by TCRgamma and TCRdelta. Interacts with CD6. Interacts (via Proline-rich sequence) with NCK1; the interaction is ligand dependent but independent of tyrosine kinase activation. In terms of processing, phosphorylated on Tyr residues after T-cell receptor triggering by LCK in association with CD4/CD8.

The protein resides in the cell membrane. Part of the TCR-CD3 complex present on T-lymphocyte cell surface that plays an essential role in adaptive immune response. When antigen presenting cells (APCs) activate T-cell receptor (TCR), TCR-mediated signals are transmitted across the cell membrane by the CD3 chains CD3D, CD3E, CD3G and CD3Z. All CD3 chains contain immunoreceptor tyrosine-based activation motifs (ITAMs) in their cytoplasmic domain. Upon TCR engagement, these motifs become phosphorylated by Src family protein tyrosine kinases LCK and FYN, resulting in the activation of downstream signaling pathways. In addition of this role of signal transduction in T-cell activation, CD3E plays an essential role in correct T-cell development. Also participates in internalization and cell surface down-regulation of TCR-CD3 complexes via endocytosis sequences present in CD3E cytosolic region. In addition to its role as a TCR coreceptor, it serves as a receptor for ITPRIPL1. Ligand recognition inhibits T-cell activation by promoting interaction with NCK1, which prevents CD3E-ZAP70 interaction and blocks the ERK-NFkB signaling cascade and calcium influx. The protein is T-cell surface glycoprotein CD3 epsilon chain (CD3E) of Bos taurus (Bovine).